The sequence spans 330 residues: MKKSFIEKQQQISFVKSFFSRLLESKLGLIEVQGPILSCLGDGIQDNLSGHEKAVQVKVKTLPDSTFEVVHSLAKWKRRTLGRFGFQPEQGLYTHMKALRPDEDRLTPIHSVYVDQWDWEKVMEDGQRSLAYLKQTVGKIYEAIKETEKAVNKEFGLAPFLPDQIHFVHSETLLSRYPDLDAKGRERAIAKELGAVFLIGIGAKLSDGQSHDVRAPDYDDWTTPNSDGFVGLNGDIIVWNPVLEDAFEISSMGIRVDAEALERQLALTSDEERLQYDWHQALLKGDMPQSIGGGIGQSRLVMLLLQMKHIGQVQCSIWSPEVRETVEDML.

It belongs to the class-II aminoacyl-tRNA synthetase family. AsnA subfamily.

The protein localises to the cytoplasm. It carries out the reaction L-aspartate + NH4(+) + ATP = L-asparagine + AMP + diphosphate + H(+). It participates in amino-acid biosynthesis; L-asparagine biosynthesis; L-asparagine from L-aspartate (ammonia route): step 1/1. The polypeptide is Aspartate--ammonia ligase (Photorhabdus laumondii subsp. laumondii (strain DSM 15139 / CIP 105565 / TT01) (Photorhabdus luminescens subsp. laumondii)).